The primary structure comprises 243 residues: MVSLREQWNEQARERQREISARKTEIEEARSSIQKELQAQYEARLAATQQLQSELRQFYNNLANDTAGFLERTRTTREQMAQKLEQELTQLITDLENNTAALLQEANQERVRVSQQQKALAIELKNQLAQFHEQLETSVGNWRQETQEQQQQTAAQLREDLNAFSANLMAQVEKLLINLEETRTANAQQQREALFNFRRQLTVDVWGETESDSLKVEENTPSDVWGETESDFLEVEENTPFVT.

It belongs to the gas vesicle GvpC family.

Its subcellular location is the gas vesicle shell. Functionally, may confer stability to the gas vesicle shells. Gas vesicles are small, hollow, gas filled protein structures that are found in several microbial planktonic microorganisms. They allow the positioning of the organism at the favorable depth for growth. The sequence is that of 35 kDa gas vesicle protein from Dactylococcopsis salina (strain PCC 8305) (Myxobactron salinum).